The sequence spans 266 residues: MNYLEGVGSKKGGGGIASESQFNLQRRKEVESLLSKGENVPYTFQDEKDDQVRSNPYIYKNHSGKLVCKLCNTMHMSWSSVERHLGGKKHGLNVLRRGISIEKSSLGREGQTTHDFRQQQKIIEAKQSLKNNGTIPVCKIATVKNPKNGSVGLAIQVNYSSEVKENSVDSDDKAKVPPLIRIVSGLELSDTKQKGKKFLVIAYEPFENIAIELPPNEILFSENNDMDNNNDGVDELNKKCTFWDAISKLYYVQFFFKQAEQEQADV.

A disordered region spans residues 1–21 (MNYLEGVGSKKGGGGIASESQ). The segment at 66–96 (LVCKLCNTMHMSWSSVERHLGGKKHGLNVLR) adopts a Matrin-type zinc-finger fold.

Belongs to the SF3A2 family. Belongs to the CWC complex (or CEF1-associated complex), a spliceosome sub-complex reminiscent of a late-stage spliceosome composed of the U2, U5 and U6 snRNAs and at least BUD13, BUD31, BRR2, CDC40, CEF1, CLF1, CUS1, CWC2, CWC15, CWC21, CWC22, CWC23, CWC24, CWC25, CWC27, ECM2, HSH155, IST3, ISY1, LEA1, MSL1, NTC20, PRP8, PRP9, PRP11, PRP19, PRP21, PRP22, PRP45, PRP46, SLU7, SMB1, SMD1, SMD2, SMD3, SMX2, SMX3, SNT309, SNU114, SPP2, SYF1, SYF2, RSE1 and YJU2. Interacts with CUS2.

It localises to the nucleus. Functionally, mRNA splicing factors, PRP9, PRP11, and PRP21, are necessary for addition of the U2 snRNP to the pre-mRNA in an early step of spliceosome assembly. This chain is Pre-mRNA-splicing factor PRP11 (PRP11), found in Saccharomyces cerevisiae (strain ATCC 204508 / S288c) (Baker's yeast).